A 21-amino-acid polypeptide reads, in one-letter code: Large ribosomal subunit protein uL30 (21 aa).

The span at 1-15 (AKTENKTVTVRQTAS) shows a compositional bias: polar residues. A disordered region spans residues 1–21 (AKTENKTVTVRQTASPIXXXK).

This sequence belongs to the universal ribosomal protein uL30 family. As to quaternary structure, part of the 50S ribosomal subunit.

The sequence is that of Large ribosomal subunit protein uL30 (rpmD) from Brevundimonas diminuta (Pseudomonas diminuta).